The following is a 271-amino-acid chain: Bifunctional protein FolD (271 aa).

NADP(+)-binding positions include 154 to 156 (GRS), T181, and I222.

Belongs to the tetrahydrofolate dehydrogenase/cyclohydrolase family. In terms of assembly, homodimer.

The catalysed reaction is (6R)-5,10-methylene-5,6,7,8-tetrahydrofolate + NADP(+) = (6R)-5,10-methenyltetrahydrofolate + NADPH. It catalyses the reaction (6R)-5,10-methenyltetrahydrofolate + H2O = (6R)-10-formyltetrahydrofolate + H(+). Its pathway is one-carbon metabolism; tetrahydrofolate interconversion. Catalyzes the oxidation of 5,10-methylenetetrahydrofolate to 5,10-methenyltetrahydrofolate and then the hydrolysis of 5,10-methenyltetrahydrofolate to 10-formyltetrahydrofolate. The sequence is that of Bifunctional protein FolD from Thermosipho melanesiensis (strain DSM 12029 / CIP 104789 / BI429).